The primary structure comprises 275 residues: MASPLKILISNDDGVFAEGIKALAHEAARRGHSVTVVCPDQERSATGHGLTLQSPIRAEQADGLFADGIRAWACTGTPSDCVKLALGKLLEAPPDLVLSGINHGPNLGSDVIYSGTVAAAMEGTLEGLPALAVSSACFDWRQFDGAAVQAMDVAESALAGGWPEGLLLNLNVPAVPPDRIGPVRWCRPGVRRYVDQFDERFDPRGRSYYWLAGEVVNDFEAAGTGPKDWPTDVAQVQGGGVALTPLQPELFWRGALPPLPIAGVSAAPDAAAARG.

Residues D12, D13, S44, and N102 each coordinate a divalent metal cation.

Belongs to the SurE nucleotidase family. The cofactor is a divalent metal cation.

The protein resides in the cytoplasm. It catalyses the reaction a ribonucleoside 5'-phosphate + H2O = a ribonucleoside + phosphate. Its function is as follows. Nucleotidase that shows phosphatase activity on nucleoside 5'-monophosphates. The polypeptide is 5'-nucleotidase SurE (Synechococcus sp. (strain RCC307)).